A 260-amino-acid polypeptide reads, in one-letter code: Thymidylate synthase (260 aa).

Position 21 (Arg21) interacts with dUMP. A (6R)-5,10-methylene-5,6,7,8-tetrahydrofolate-binding site is contributed by His51. 122-123 contacts dUMP; the sequence is RR. The active-site Nucleophile is Cys142. DUMP is bound by residues 162 to 165, Asn173, and 203 to 205; these read RSAD and HLY. Asp165 serves as a coordination point for (6R)-5,10-methylene-5,6,7,8-tetrahydrofolate. Ala259 contacts (6R)-5,10-methylene-5,6,7,8-tetrahydrofolate.

Belongs to the thymidylate synthase family. Bacterial-type ThyA subfamily. Homodimer.

The protein localises to the cytoplasm. It catalyses the reaction dUMP + (6R)-5,10-methylene-5,6,7,8-tetrahydrofolate = 7,8-dihydrofolate + dTMP. It participates in pyrimidine metabolism; dTTP biosynthesis. Catalyzes the reductive methylation of 2'-deoxyuridine-5'-monophosphate (dUMP) to 2'-deoxythymidine-5'-monophosphate (dTMP) while utilizing 5,10-methylenetetrahydrofolate (mTHF) as the methyl donor and reductant in the reaction, yielding dihydrofolate (DHF) as a by-product. This enzymatic reaction provides an intracellular de novo source of dTMP, an essential precursor for DNA biosynthesis. The sequence is that of Thymidylate synthase from Methylococcus capsulatus (strain ATCC 33009 / NCIMB 11132 / Bath).